Reading from the N-terminus, the 515-residue chain is Ribonuclease Y (515 aa).

Residues 6–26 (LTSFVIITLSLAVGLTGGYYG) form a helical membrane-spanning segment. In terms of domain architecture, KH spans 205 to 290 (TVSVVPLPND…EMVEKARKEI (86 aa)). The HD domain maps to 331 to 424 (VLRHSVEVAH…VQAADAISAS (94 aa)).

The protein belongs to the RNase Y family.

The protein resides in the cell membrane. Its function is as follows. Endoribonuclease that initiates mRNA decay. The sequence is that of Ribonuclease Y from Syntrophomonas wolfei subsp. wolfei (strain DSM 2245B / Goettingen).